The sequence spans 801 residues: MIFSKHLLSHFVDISHLDIEQMCMRLSSMGLEVESAYPLKMPQKVVVGKILSLTPHPDADKLNVCKVSIGSQELQIVCGANNVKANQYVAVALEGAVIPHTKSGEIVIKQTNLRGIESCGMLCSSVELGLPKINDGIMVLDSTAGHLELGVELGNLPLFNDYVIEVGITPNRGDCLSVLGIARELATSYDLRLKHEVDMDNVVTLGLGRVLQILCDEKIEAHLLYRVVEVKQAYLPLDIALCLARNGSLVDDIMCNFLEYGTYMTGVILNAYKLYDCENKDIVLDNGLVAQLRIKKDENGLGAVFAHQKLSIIGVSYGERHFGTRSEIYIIEASYVNPTLIAKSLYKHAIKGDVQLTYRSTRGSNPNLEQGIDFLCRKMVLVSDALVYSGSHNIVQNIDEITIKTTFKAINQIIGIELDKEEIATILKRLNFKLDATCDENFFMVTVPNYRHDIQSIQDVAEEVLRIYGIDNVSSVPLLCSQSHNINNTYFTYKNTRKLAYGLIAYGFVECIHYVFASSQNLERLGFVRLDEDLELLNPITNELDTLRTSLLPAMLDSVKRNENLGFKNITLFEIGSVYSSKREEKSKLALVASGCMQDECYPHTKAVKWNLFAFGTICQRCVGDLSFRNIRDEANAKELLSHFCFTDERLLHPYQSAFVYQKDKPIGIIAKLHPQVATNMDLSEEIFICEIEIGMSDFSLPQAYEFSKYQKSTRDLTILIDKDIPFYRVRQILLEDQIAYVKNIYPIDVYYDKALGEKMALSIRIVLQSDEGTLQEMQLVQAVESVLSVLVREFDAVLRT.

A tRNA-binding domain is found at 39–154 (LKMPQKVVVG…GHLELGVELG (116 aa)). The 78-residue stretch at 398-475 (IDEITIKTTF…RIYGIDNVSS (78 aa)) folds into the B5 domain. 4 residues coordinate Mg(2+): Asp453, Asp459, Glu462, and Glu463. Residues 708 to 800 (SKYQKSTRDL…LVREFDAVLR (93 aa)) enclose the FDX-ACB domain.

The protein belongs to the phenylalanyl-tRNA synthetase beta subunit family. Type 1 subfamily. As to quaternary structure, tetramer of two alpha and two beta subunits. Mg(2+) is required as a cofactor.

It is found in the cytoplasm. It catalyses the reaction tRNA(Phe) + L-phenylalanine + ATP = L-phenylalanyl-tRNA(Phe) + AMP + diphosphate + H(+). The sequence is that of Phenylalanine--tRNA ligase beta subunit from Helicobacter hepaticus (strain ATCC 51449 / 3B1).